A 362-amino-acid polypeptide reads, in one-letter code: L-asparaginase 2-1 (362 aa).

The N-terminal stretch at 1–25 (MRSLNTLLLSLFVAMSSGAPLLKIR) is a signal peptide. N-linked (GlcNAc...) asparagine glycosylation is present at asparagine 29. The Asparaginase/glutaminase domain maps to 33 to 359 (PSIKIFGTGG…DQIRSVFSGV (327 aa)). The active-site O-isoaspartyl threonine intermediate is threonine 43. Serine 89 lines the substrate pocket. N-linked (GlcNAc...) asparagine glycosylation is present at asparagine 93. Residue 122–123 (TD) coordinates substrate. N-linked (GlcNAc...) asparagine glycosylation occurs at asparagine 239.

The protein belongs to the asparaginase 1 family.

It localises to the secreted. The protein resides in the periplasm. The catalysed reaction is L-asparagine + H2O = L-aspartate + NH4(+). The chain is L-asparaginase 2-1 (ASP3-1) from Saccharomyces cerevisiae (strain ATCC 204508 / S288c) (Baker's yeast).